The following is a 403-amino-acid chain: UPF0229 protein CKR_0568 (403 aa).

Residues 71–109 (SSGVGSGDGSQKKGDRIGKAIKDRDGKGNQGAGNQEGED) form a disordered region. The span at 80-97 (SQKKGDRIGKAIKDRDGK) shows a compositional bias: basic and acidic residues.

This sequence belongs to the UPF0229 family.

The sequence is that of UPF0229 protein CKR_0568 from Clostridium kluyveri (strain NBRC 12016).